We begin with the raw amino-acid sequence, 306 residues long: Tyrosine recombinase XerD (306 aa).

Residues 1 to 83 enclose the Core-binding (CB) domain; the sequence is MGFIAQFLEM…TIKSYYEFLI (83 aa). One can recognise a Tyr recombinase domain in the interval 104 to 299; the sequence is KLPEILSIAQ…QTNHLKKALL (196 aa). Catalysis depends on residues R145, K176, H251, R254, and H277. Y286 functions as the O-(3'-phospho-DNA)-tyrosine intermediate in the catalytic mechanism.

It belongs to the 'phage' integrase family. XerD subfamily. Forms a cyclic heterotetrameric complex composed of two molecules of XerC and two molecules of XerD.

It is found in the cytoplasm. Site-specific tyrosine recombinase, which acts by catalyzing the cutting and rejoining of the recombining DNA molecules. The XerC-XerD complex is essential to convert dimers of the bacterial chromosome into monomers to permit their segregation at cell division. It also contributes to the segregational stability of plasmids. The sequence is that of Tyrosine recombinase XerD from Rickettsia conorii (strain ATCC VR-613 / Malish 7).